We begin with the raw amino-acid sequence, 364 residues long: Spermidine/putrescine import ATP-binding protein PotA (364 aa).

The 231-residue stretch at 6–236 (IEIRQIYKSY…PANLHVAMFI (231 aa)) folds into the ABC transporter domain. 38–45 (GPSGCGKT) contacts ATP.

It belongs to the ABC transporter superfamily. Spermidine/putrescine importer (TC 3.A.1.11.1) family. As to quaternary structure, the complex is composed of two ATP-binding proteins (PotA), two transmembrane proteins (PotB and PotC) and a solute-binding protein (PotD).

It is found in the cell inner membrane. It catalyses the reaction ATP + H2O + polyamine-[polyamine-binding protein]Side 1 = ADP + phosphate + polyamineSide 2 + [polyamine-binding protein]Side 1.. Part of the ABC transporter complex PotABCD involved in spermidine/putrescine import. Responsible for energy coupling to the transport system. This is Spermidine/putrescine import ATP-binding protein PotA from Legionella pneumophila subsp. pneumophila (strain Philadelphia 1 / ATCC 33152 / DSM 7513).